The following is a 182-amino-acid chain: uncharacterized protein (182 aa).

This is an uncharacterized protein from Thermoproteus tenax (TTV1).